The following is a 1324-amino-acid chain: Structural maintenance of chromosomes protein 4 (1324 aa).

Residues 1–24 are disordered; sequence MSDKGIFRTSSTPSIVDVTPDRGE. A Phosphothreonine; by CDC2 modification is found at threonine 19. 155–162 is a binding site for ATP; sequence GPNGSGKS. Coiled coils occupy residues 310–337 and 370–628; these read QELS…AKLE and NKKT…KASL. Positions 651 to 764 constitute an SMC hinge domain; that stretch reads NGFFGRLGDL…KNLEQANRIA (114 aa). 2 coiled-coil regions span residues 825 to 1077 and 1297 to 1324; these read YRQH…MSNL and LSSR…ILTD.

Belongs to the SMC family. SMC4 subfamily. Forms a heterodimer with cut14/smc2. Component of the condensin complex, which contains the smc2 and smc4 heterodimer, and three non smc subunits that probably regulate the complex: cnd1, cnd2 and cnd3. Interacts with C1739.07. In terms of processing, phosphorylated by CDC2 on Thr-19 at metaphase.

It localises to the nucleus. It is found in the cytoplasm. Its subcellular location is the chromosome. In terms of biological role, central component of the condensin complex, a complex required for conversion of interphase chromatin into mitotic-like condense chromosomes. The condensin complex probably introduces positive supercoils into relaxed DNA in the presence of type I topoisomerases and converts nicked DNA into positive knotted forms in the presence of type II topoisomerases. The polypeptide is Structural maintenance of chromosomes protein 4 (cut3) (Schizosaccharomyces pombe (strain 972 / ATCC 24843) (Fission yeast)).